Reading from the N-terminus, the 807-residue chain is Glycerol-3-phosphate acyltransferase (807 aa).

The HXXXXD motif motif lies at 308 to 313; the sequence is CHRSHM.

It belongs to the GPAT/DAPAT family.

The protein resides in the cell inner membrane. It carries out the reaction sn-glycerol 3-phosphate + an acyl-CoA = a 1-acyl-sn-glycero-3-phosphate + CoA. Its pathway is phospholipid metabolism; CDP-diacylglycerol biosynthesis; CDP-diacylglycerol from sn-glycerol 3-phosphate: step 1/3. In Shewanella sp. (strain ANA-3), this protein is Glycerol-3-phosphate acyltransferase.